Here is a 96-residue protein sequence, read N- to C-terminus: Protein Vpr (96 aa).

Residues 1-42 (MEQAPEDQGPQREPYNEWTLDLLEELKNEAVRHFPRPWLHSL) form a homooligomerization region. A phosphoserine; by host mark is found at Ser79, Ser94, and Ser96.

It belongs to the HIV-1 VPR protein family. As to quaternary structure, homooligomer, may form homodimer. Interacts with p6-gag region of the Pr55 Gag precursor protein through a (Leu-X-X)4 motif near the C-terminus of the P6gag protein. Interacts with host UNG. May interact with host RAD23A/HHR23A. Interacts with host VPRBP/DCAF1, leading to hijack the CUL4A-RBX1-DDB1-DCAF1/VPRBP complex, mediating ubiquitination of host proteins such as TERT and ZGPAT and arrest of the cell cycle in G2 phase. In terms of processing, phosphorylated on several residues by host. These phosphorylations regulate VPR activity for the nuclear import of the HIV-1 pre-integration complex.

It is found in the virion. The protein resides in the host nucleus. It localises to the host extracellular space. Its function is as follows. During virus replication, may deplete host UNG protein, and incude G2-M cell cycle arrest. Acts by targeting specific host proteins for degradation by the 26S proteasome, through association with the cellular CUL4A-DDB1 E3 ligase complex by direct interaction with host VPRPB/DCAF-1. Cell cycle arrest reportedly occurs within hours of infection and is not blocked by antiviral agents, suggesting that it is initiated by the VPR carried into the virion. Additionally, VPR induces apoptosis in a cell cycle dependent manner suggesting that these two effects are mechanistically linked. Detected in the serum and cerebrospinal fluid of AIDS patient, VPR may also induce cell death to bystander cells. Functionally, during virus entry, plays a role in the transport of the viral pre-integration (PIC) complex to the host nucleus. This function is crucial for viral infection of non-dividing macrophages. May act directly at the nuclear pore complex, by binding nucleoporins phenylalanine-glycine (FG)-repeat regions. The chain is Protein Vpr from Human immunodeficiency virus type 1 group M subtype F1 (isolate 93BR020) (HIV-1).